Reading from the N-terminus, the 493-residue chain is Lysine--tRNA ligase (493 aa).

Residues 26–34 carry the 'HIGH' region motif; sequence PSGHIHLGN. Positions 270–274 match the 'KMSKS' region motif; the sequence is AMKSS.

Belongs to the class-I aminoacyl-tRNA synthetase family.

The protein resides in the cytoplasm. It carries out the reaction tRNA(Lys) + L-lysine + ATP = L-lysyl-tRNA(Lys) + AMP + diphosphate. In Archaeoglobus fulgidus (strain ATCC 49558 / DSM 4304 / JCM 9628 / NBRC 100126 / VC-16), this protein is Lysine--tRNA ligase (lysS).